The sequence spans 651 residues: Chaperone protein HtpG (651 aa).

Residues 1–353 (MAPHVEQLEF…AQDMSLNVSR (353 aa)) form an a; substrate-binding region. Residues 354 to 569 (EILQQDRQIR…TFGITPALAR (216 aa)) are b. A c region spans residues 570 to 651 (MYRASGQPVP…RLTRMVGEQS (82 aa)).

This sequence belongs to the heat shock protein 90 family. As to quaternary structure, homodimer.

Its subcellular location is the cytoplasm. Functionally, molecular chaperone. Has ATPase activity. This is Chaperone protein HtpG from Mycolicibacterium gilvum (strain PYR-GCK) (Mycobacterium gilvum (strain PYR-GCK)).